The primary structure comprises 430 residues: Histidine--tRNA ligase (430 aa).

Belongs to the class-II aminoacyl-tRNA synthetase family. Homodimer.

It is found in the cytoplasm. It catalyses the reaction tRNA(His) + L-histidine + ATP = L-histidyl-tRNA(His) + AMP + diphosphate + H(+). The polypeptide is Histidine--tRNA ligase (Chlamydia caviae (strain ATCC VR-813 / DSM 19441 / 03DC25 / GPIC) (Chlamydophila caviae)).